The primary structure comprises 191 residues: Transcription factor E (191 aa).

In terms of domain architecture, HTH TFE/IIEalpha-type spans 4–87; that stretch reads RNKELLEIGR…YWHIETKRLP (84 aa). The tract at residues 170-191 is disordered; it reads APPKKEKKGKKSKKRSKKSKKK. Residues 174–191 are compositionally biased toward basic residues; it reads KEKKGKKSKKRSKKSKKK.

The protein belongs to the TFE family. In terms of assembly, monomer. Interaction with RNA polymerase subunits RpoF and RpoE is necessary for Tfe stimulatory transcription activity. Able to interact with Tbp and RNA polymerase in the absence of DNA promoter. Interacts both with the preinitiation and elongation complexes.

In terms of biological role, transcription factor that plays a role in the activation of archaeal genes transcribed by RNA polymerase. Facilitates transcription initiation by enhancing TATA-box recognition by TATA-box-binding protein (Tbp), and transcription factor B (Tfb) and RNA polymerase recruitment. Not absolutely required for transcription in vitro, but particularly important in cases where Tbp or Tfb function is not optimal. It dynamically alters the nucleic acid-binding properties of RNA polymerases by stabilizing the initiation complex and destabilizing elongation complexes. Seems to translocate with the RNA polymerase following initiation and acts by binding to the non template strand of the transcription bubble in elongation complexes. This Pyrococcus horikoshii (strain ATCC 700860 / DSM 12428 / JCM 9974 / NBRC 100139 / OT-3) protein is Transcription factor E.